Here is a 357-residue protein sequence, read N- to C-terminus: F-box only protein 25 (357 aa).

An interaction with beta-actin region spans residues 1 to 83; the sequence is MPFLGQDWRS…NDTNTQCFYR (83 aa). The F-box domain occupies 225 to 273; that stretch reads LTLSDLPVHMLSNILYRFSDGWDIVTLGQVTPTLSALSEDRQLWKKLCQ.

Part of a SCF (SKP1-cullin-F-box) protein ligase complex consisting of FBXO25, SKP1, CUL1 and RBX1. Interacts directly with SKP1 and CUL1. Interacts (via C-terminus) with beta-actin (via N-terminus).

It localises to the nucleus. Its pathway is protein modification; protein ubiquitination. Functionally, substrate-recognition component of the SCF (SKP1-CUL1-F-box protein)-type E3 ubiquitin ligase complex. May play a role in accumulation of expanded polyglutamine (polyQ) protein huntingtin (HTT). In Bos taurus (Bovine), this protein is F-box only protein 25 (FBXO25).